Here is a 180-residue protein sequence, read N- to C-terminus: NADH-quinone oxidoreductase subunit I (180 aa).

4Fe-4S ferredoxin-type domains lie at 50 to 80 and 90 to 119; these read LTRDPDGEERCVACNLCAVACPVGCISLQKT and EFFRINFSRCIFCGLCEEACPTTAIQLTPD. Cys-60, Cys-63, Cys-66, Cys-70, Cys-99, Cys-102, Cys-105, and Cys-109 together coordinate [4Fe-4S] cluster.

The protein belongs to the complex I 23 kDa subunit family. NDH-1 is composed of 13 different subunits. Subunits NuoA, H, J, K, L, M, N constitute the membrane sector of the complex. The cofactor is [4Fe-4S] cluster.

It is found in the cell inner membrane. The enzyme catalyses a quinone + NADH + 5 H(+)(in) = a quinol + NAD(+) + 4 H(+)(out). Its function is as follows. NDH-1 shuttles electrons from NADH, via FMN and iron-sulfur (Fe-S) centers, to quinones in the respiratory chain. The immediate electron acceptor for the enzyme in this species is believed to be ubiquinone. Couples the redox reaction to proton translocation (for every two electrons transferred, four hydrogen ions are translocated across the cytoplasmic membrane), and thus conserves the redox energy in a proton gradient. The protein is NADH-quinone oxidoreductase subunit I of Shigella dysenteriae serotype 1 (strain Sd197).